Here is a 438-residue protein sequence, read N- to C-terminus: Glucose-6-phosphate isomerase (438 aa).

Glutamate 289 acts as the Proton donor in catalysis. Active-site residues include histidine 310 and lysine 424.

Belongs to the GPI family.

It is found in the cytoplasm. It catalyses the reaction alpha-D-glucose 6-phosphate = beta-D-fructose 6-phosphate. The protein operates within carbohydrate biosynthesis; gluconeogenesis. It functions in the pathway carbohydrate degradation; glycolysis; D-glyceraldehyde 3-phosphate and glycerone phosphate from D-glucose: step 2/4. Functionally, catalyzes the reversible isomerization of glucose-6-phosphate to fructose-6-phosphate. The polypeptide is Glucose-6-phosphate isomerase (Oenococcus oeni (strain ATCC BAA-331 / PSU-1)).